We begin with the raw amino-acid sequence, 473 residues long: N-lysine methyltransferase SETD6 (473 aa).

Residue K39 is modified to N6-methylated lysine; by autocatalysis. Residues 60–286 enclose the SET domain; the sequence is PPAQVAVSRQ…KGHEIFNTYG (227 aa). 73-75 is a binding site for S-adenosyl-L-methionine; the sequence is AGY. W122 lines the substrate pocket. Position 179 is an N6-methylated lysine; by autocatalysis (K179). Y223 provides a ligand contact to S-adenosyl-L-methionine. S224 and Q226 together coordinate substrate. 251-252 contributes to the S-adenosyl-L-methionine binding site; it reads NH. Substrate-binding residues include Y262 and Y297. Residue Y297 coordinates S-adenosyl-L-methionine. At K372 the chain carries N6-methylated lysine; by autocatalysis.

Belongs to the class V-like SAM-binding methyltransferase superfamily. Histone-lysine methyltransferase family. SETD6 subfamily. As to quaternary structure, monomer, homodimer and homotrimer; these structures are stabilized in the presence of S-adenosyl-L-methionine (SAM). Post-translationally, automethylated; Lys-39 and Lys-179 serve as the major automethylation sites.

Its subcellular location is the nucleus. The enzyme catalyses L-lysyl-[protein] + S-adenosyl-L-methionine = N(6)-methyl-L-lysyl-[protein] + S-adenosyl-L-homocysteine + H(+). The catalysed reaction is L-lysyl(8)-[histone H2AZ] + S-adenosyl-L-methionine = N(6)-methyl-L-lysyl(8)-[histone H2AZ] + S-adenosyl-L-homocysteine + H(+). Its activity is regulated as follows. Activated by automethylation. Protein-lysine N-methyltransferase. Monomethylates 'Lys-310' of the RELA subunit of NF-kappa-B complex, leading to down-regulation of NF-kappa-B transcription factor activity. Monomethylates 'Lys-8' of H2AZ (H2AZK8me1). Required for the maintenance of embryonic stem cell self-renewal. Methylates PAK4. This Homo sapiens (Human) protein is N-lysine methyltransferase SETD6.